The following is a 389-amino-acid chain: Nucleic acid dioxygenase ALKBH1 (389 aa).

The tRNA-binding stretch occupies residues 86 to 389 (SKWQAYGLKG…VKRARINPDS (304 aa)). Substrate is bound by residues W144 and 175-177 (YHY). Residues 208–347 (GFEDFRAEAG…RVNMTVRQVL (140 aa)) form the Fe2OG dioxygenase domain. 220–222 (NYY) serves as a coordination point for 2-oxoglutarate. 3 residues coordinate Fe cation: H231, D233, and H287. D233 contributes to the substrate binding site. 2-oxoglutarate is bound at residue 338-344 (RVNMTVR).

The protein belongs to the alkB family. In terms of assembly, monomer. Interacts with DNAJB6. Fe(2+) is required as a cofactor. As to expression, ubiquitous.

The protein resides in the nucleus. Its subcellular location is the mitochondrion. It carries out the reaction 2'-deoxyribonucleotide-(2'-deoxyribose 5'-phosphate)-2'-deoxyribonucleotide-DNA = a 3'-end 2'-deoxyribonucleotide-(2,3-dehydro-2,3-deoxyribose 5'-phosphate)-DNA + a 5'-end 5'-phospho-2'-deoxyribonucleoside-DNA + H(+). The catalysed reaction is a methylated nucleobase within DNA + 2-oxoglutarate + O2 = a nucleobase within DNA + formaldehyde + succinate + CO2. The enzyme catalyses an N(6)-methyl-2'-deoxyadenosine in DNA + 2-oxoglutarate + O2 = a 2'-deoxyadenosine in DNA + formaldehyde + succinate + CO2. It catalyses the reaction an N(1)-methyladenosine in tRNA + 2-oxoglutarate + O2 = an adenosine in tRNA + formaldehyde + succinate + CO2. It carries out the reaction 5-methylcytidine(34) in mitochondrial tRNA(Met) + 2 2-oxoglutarate + 2 O2 = 5-formylcytidine(34) in mitochondrial tRNA(Met) + 2 succinate + 2 CO2 + H2O. The catalysed reaction is an N(3)-methylcytidine in mRNA + 2-oxoglutarate + O2 = a cytidine in mRNA + formaldehyde + succinate + CO2. The enzyme catalyses N(1)-methyladenosine(58) in tRNA + 2-oxoglutarate + O2 = adenosine(58) in tRNA + formaldehyde + succinate + CO2. Functionally, dioxygenase that acts on nucleic acids, such as DNA and tRNA. Requires molecular oxygen, alpha-ketoglutarate and iron. A number of activities have been described for this dioxygenase, but recent results suggest that it mainly acts on tRNAs and mediates their demethylation or oxidation depending on the context and subcellular compartment. Mainly acts as a tRNA demethylase by removing N(1)-methyladenine from various tRNAs, with a preference for N(1)-methyladenine at position 58 (m1A58) present on a stem loop structure of tRNAs. Acts as a regulator of translation initiation and elongation in response to glucose deprivation: regulates both translation initiation, by mediating demethylation of tRNA(Met), and translation elongation, N(1)-methyladenine-containing tRNAs being preferentially recruited to polysomes to promote translation elongation. In mitochondrion, specifically interacts with mt-tRNA(Met) and mediates oxidation of mt-tRNA(Met) methylated at cytosine(34) to form 5-formylcytosine (f(5)c) at this position. mt-tRNA(Met) containing the f(5)c modification at the wobble position enables recognition of the AUA codon in addition to the AUG codon, expanding codon recognition in mitochondrial translation. Specifically demethylates DNA methylated on the 6th position of adenine (N(6)-methyladenosine) DNA. N(6)-methyladenosine (m6A) DNA is present at some L1 elements in embryonic stem cells and probably promotes their silencing. Demethylates mRNAs containing N(3)-methylcytidine modification. Also able to repair alkylated single-stranded DNA by oxidative demethylation, but with low activity. Also has DNA lyase activity and introduces double-stranded breaks at abasic sites: cleaves both single-stranded DNA and double-stranded DNA at abasic sites, with the greatest activity towards double-stranded DNA with two abasic sites. DNA lyase activity does not require alpha-ketoglutarate and iron and leads to the formation of an irreversible covalent protein-DNA adduct with the 5' DNA product. DNA lyase activity is not required during base excision repair and class switch recombination of the immunoglobulin heavy chain during B lymphocyte activation. May play a role in placental trophoblast lineage differentiation. The chain is Nucleic acid dioxygenase ALKBH1 from Homo sapiens (Human).